The primary structure comprises 52 residues: uncharacterized protein (52 aa).

This is an uncharacterized protein from Bos taurus papillomavirus 4 (Bovine papillomavirus 4).